The chain runs to 481 residues: MTQYTLKQASVLLQSKQISAVELASAYLAAIAEKNPALNGYITIDQDKTLAEARAADERIAQGNASALTGIPVAYKDIFCQTGWRSACASKMLDNFISPYTATVVQKLLDEGMVTLGRTNMDEFAMGSTNENSFYGAAKNPWNPEHVPGGSSGGSAAVVAARLAPAALGSDTGGSIRQPASHCGITGIKPTYGTVSRFGMVAYASSFDQAGPMAQTAEDCAILLNAMAGFDPKDSTSLEREKEDYTRDLNQPLKGLKIGLPKEYFGEGNSADVLTALQNTIDLLKAQGAELIEVSLPQTKLSIPAYYVLASAEASTNLSRYDGVRYGHRAAQFSDLEEMYGKTRAEGFGSEVKRRIMIGTYVLSHGYYDAYYLKAQKLRRLVADDFQTAFARCDLILAPTAPSAAPKIGADASPVETYLSDIYTIAVNLAGLPALTLPAGFSSGGLPIGVQLIGNYFSEAKILGAAHQIQLNSDWHGKRPE.

Residues lysine 76 and serine 151 each act as charge relay system in the active site. The active-site Acyl-ester intermediate is serine 175.

The protein belongs to the amidase family. GatA subfamily. In terms of assembly, heterotrimer of A, B and C subunits.

The catalysed reaction is L-glutamyl-tRNA(Gln) + L-glutamine + ATP + H2O = L-glutaminyl-tRNA(Gln) + L-glutamate + ADP + phosphate + H(+). Its function is as follows. Allows the formation of correctly charged Gln-tRNA(Gln) through the transamidation of misacylated Glu-tRNA(Gln) in organisms which lack glutaminyl-tRNA synthetase. The reaction takes place in the presence of glutamine and ATP through an activated gamma-phospho-Glu-tRNA(Gln). This Neisseria meningitidis serogroup A / serotype 4A (strain DSM 15465 / Z2491) protein is Glutamyl-tRNA(Gln) amidotransferase subunit A.